Consider the following 832-residue polypeptide: MRKLPLFMAWKFWLICLYIIKVASTQIVIKSNTIVGGNNPSGFQNGYIVSGDAFLAFQDMNTVPMYQTVRIDKGGALYYINNDKQGFSILSDHNYNHPFVFLNEGTVVVDDRRSISPGSWTIKDGSFTNNGNIMFTSSQGDIFSIGSNYITNTGFIFSKGTSFEKPQRLQIGNGNIWINTGTVCMANTTYILENAIQGGGCISVGENSVFNIYSFDMQQQTVYLSHPSSVLILNGGHEVPVYGLGNGNGILYPDAPIRDIYYDSSTGIMDVTAGTNGIYKFTVYIGAGYNESNFEIVSSIKIHGISYDNYNFVRYRGPPPNLAPSVCQPCVEIPLYSFQVPDPYTTTNELGFSETVSFYSTYNENDIPVIGNTTIYVPPAIYTLTKVNENTTETDIISRVTGMGYNGLPFTYYTTITVGEMETGVVTKTITITENKSRSTKTTLMSRNYTFSFSNYSPISSSGTYSVSTVDNITTLTDTVANVSSSGPNSIVTATMTTYQNNHEFNNASVINVTNSSNIMVPITSTFYSSVDSNLTTPITSLTRTSQSQIVSHITKLASSINETTIANTFPSPAASGTNYTTVVTNAEGSVQTDIVSHITTTDSDGKPTTIVSHITTTDSDGKPTTIVTTFPAPAASGADYTTVVTNADGSVETDIVSHITTKDSIGKPTTVVTTVPYTLCASNADYTTVVTKSNVSVETEVVSHITTTAPCSDLESHVENQTTSPSMHTTSLVGSENGVSAKTVNDKPNPTIFTEVAVSEGTTSNAGYVTDQGSSLEMFAPTGASAVESGNKVSQTQTASIFHGAGSTFKIKFNTILLSTSLTILILLGMA.

The first 25 residues, 1–25 (MRKLPLFMAWKFWLICLYIIKVAST), serve as a signal peptide directing secretion. Asn-187, Asn-290, Asn-372, Asn-390, Asn-435, Asn-448, Asn-472, Asn-482, Asn-507, Asn-512, Asn-515, Asn-534, Asn-562, Asn-579, Asn-695, and Asn-721 each carry an N-linked (GlcNAc...) asparagine glycan. The tract at residues 722–747 (QTTSPSMHTTSLVGSENGVSAKTVND) is disordered.

It localises to the secreted. The protein resides in the cell wall. Functionally, mediates cell-substrate adhesion and promotes biofilm formation. In Candida glabrata (strain ATCC 2001 / BCRC 20586 / JCM 3761 / NBRC 0622 / NRRL Y-65 / CBS 138) (Yeast), this protein is Adhesin AWP2.